The following is a 338-amino-acid chain: Palmitoyltransferase ZDHHC15 (338 aa).

At 1 to 20 (MLAGCRVALPRGLRCCQRVL) the chain is on the cytoplasmic side. A helical membrane pass occupies residues 21–41 (SWVPVVIISLVVLWSYYAYVW). Residues 42–56 (ELCLVTVTNPAEKAA) are Lumenal-facing. A helical membrane pass occupies residues 57–77 (YLLIFHTVFLLFIWTYWKAIF). Residues 78 to 172 (TPPKQPTKKF…NNCIGYSNYK (95 aa)) lie on the Cytoplasmic side of the membrane. One can recognise a DHHC domain in the interval 129–179 (RFCDTCQMVKPDRCHHCSVCGMCVLKMDHHCPWVNNCIGYSNYKFFLLFLA). C131, C134, H144, C145, C148, C151, and H158 together coordinate Zn(2+). C159 serves as the catalytic S-palmitoyl cysteine intermediate. Position 165 (C165) interacts with Zn(2+). Residues 173–193 (FFLLFLAYAMLYCLYIGCTVF) traverse the membrane as a helical segment. The Lumenal segment spans residues 194–210 (QYFILYWTDTLSNGRAK). Residues 211–234 (FHVLFLLFVALMFFISLMFLFGYH) form a helical membrane-spanning segment. Residues 235 to 338 (CWLVSLNRTT…TSHITVHIEK (104 aa)) lie on the Cytoplasmic side of the membrane.

The protein belongs to the DHHC palmitoyltransferase family. Post-translationally, autopalmitoylated (in vitro).

The protein localises to the golgi apparatus membrane. It localises to the postsynaptic density. The catalysed reaction is L-cysteinyl-[protein] + hexadecanoyl-CoA = S-hexadecanoyl-L-cysteinyl-[protein] + CoA. The enzyme catalyses L-cysteinyl-[protein] + tetradecanoyl-CoA = S-tetradecanoyl-L-cysteinyl-[protein] + CoA. It carries out the reaction L-cysteinyl-[protein] + octadecanoyl-CoA = S-octadecanoyl-L-cysteinyl-[protein] + CoA. Functionally, palmitoyltransferase that catalyzes the addition of palmitate onto various protein substrates. Has no stringent fatty acid selectivity and in addition to palmitate can also transfer onto target proteins myristate from tetradecanoyl-CoA and stearate from octadecanoyl-CoA. May thereby regulate target proteins association and localization to membranes. In the nervous system, probably catalyzes the palmitoylation of synaptic proteins and is involved in the differentiation of dopaminergic neurons and the development of the diencephalon. The chain is Palmitoyltransferase ZDHHC15 (zdhhc15) from Xenopus laevis (African clawed frog).